A 362-amino-acid chain; its full sequence is Aminomethyltransferase (362 aa).

This sequence belongs to the GcvT family. The glycine cleavage system is composed of four proteins: P, T, L and H.

The enzyme catalyses N(6)-[(R)-S(8)-aminomethyldihydrolipoyl]-L-lysyl-[protein] + (6S)-5,6,7,8-tetrahydrofolate = N(6)-[(R)-dihydrolipoyl]-L-lysyl-[protein] + (6R)-5,10-methylene-5,6,7,8-tetrahydrofolate + NH4(+). The glycine cleavage system catalyzes the degradation of glycine. In Colwellia psychrerythraea (strain 34H / ATCC BAA-681) (Vibrio psychroerythus), this protein is Aminomethyltransferase.